Here is a 61-residue protein sequence, read N- to C-terminus: Large ribosomal subunit protein bL28 (61 aa).

The disordered stretch occupies residues 1–27 (MAKDFVTGKKTTFGNTRSHALNSSSRS). The span at 9–27 (KKTTFGNTRSHALNSSSRS) shows a compositional bias: polar residues.

This sequence belongs to the bacterial ribosomal protein bL28 family.

The protein is Large ribosomal subunit protein bL28 of Lactobacillus delbrueckii subsp. bulgaricus (strain ATCC 11842 / DSM 20081 / BCRC 10696 / JCM 1002 / NBRC 13953 / NCIMB 11778 / NCTC 12712 / WDCM 00102 / Lb 14).